Consider the following 195-residue polypeptide: Probable cobalt-precorrin-6B C(15)-methyltransferase (decarboxylating) (195 aa).

Residues Thr-24, 48–52 (GCGTG), Asp-72, and Ala-101 contribute to the S-adenosyl-L-methionine site.

The protein belongs to the methyltransferase superfamily. Archaeal-type CbiT family.

It carries out the reaction Co-precorrin-6B + S-adenosyl-L-methionine = Co-precorrin-7 + S-adenosyl-L-homocysteine + CO2. Its pathway is cofactor biosynthesis; adenosylcobalamin biosynthesis; cob(II)yrinate a,c-diamide from sirohydrochlorin (anaerobic route): step 8/10. Functionally, catalyzes the methylation of C-15 in cobalt-precorrin-6B followed by the decarboxylation of C-12 to form cobalt-precorrin-7. This Pyrobaculum calidifontis (strain DSM 21063 / JCM 11548 / VA1) protein is Probable cobalt-precorrin-6B C(15)-methyltransferase (decarboxylating).